We begin with the raw amino-acid sequence, 334 residues long: Replication factor C small subunit (334 aa).

49–56 lines the ATP pocket; it reads GPPGVGKT.

It belongs to the activator 1 small subunits family. RfcS subfamily. Heteromultimer composed of small subunits (RfcS) and large subunits (RfcL).

Its function is as follows. Part of the RFC clamp loader complex which loads the PCNA sliding clamp onto DNA. This is Replication factor C small subunit from Methanosarcina barkeri (strain Fusaro / DSM 804).